The following is a 267-amino-acid chain: B3 domain-containing protein Os02g0455800 (267 aa).

Positions 30 to 131 (EKFLMPSDLC…RLFICCRLGT (102 aa)) form a DNA-binding region, TF-B3. Residues 172-221 (QARLHDGNQDGGGAPSRHVPSSGRRVEAQLSRVSSRRQRRTMKHSIPEPT) are disordered. Positions 205–214 (SSRRQRRTMK) are enriched in basic residues.

Its subcellular location is the nucleus. This Oryza sativa subsp. japonica (Rice) protein is B3 domain-containing protein Os02g0455800.